The primary structure comprises 968 residues: Catenin delta-1 (968 aa).

At methionine 1 the chain carries N-acetylmethionine. Positions 1–357 (MDDSEVESTA…ASLDSLRKGG (357 aa)) are necessary and sufficient for interaction with CCDC85B. A Phosphoserine modification is found at serine 4. Positions 10–46 (ASILASVKEQEAQFEKLTRALEEERRHVSAQLERVRV) form a coiled coil. At serine 47 the chain carries Phosphoserine. The residue at position 59 (threonine 59) is a Phosphothreonine. Residue tyrosine 112 is modified to Phosphotyrosine; by FYN. Position 125 is a phosphoserine (serine 125). Phosphotyrosine is present on residues tyrosine 217 and tyrosine 221. Serine 225 is subject to Phosphoserine. Phosphotyrosine is present on tyrosine 228. Phosphoserine occurs at positions 230 and 252. A Phosphotyrosine modification is found at tyrosine 257. Serine 268 and serine 269 each carry phosphoserine. The residue at position 280 (tyrosine 280) is a Phosphotyrosine. At serine 288 the chain carries Phosphoserine; by PAK5. Tyrosine 291 carries the post-translational modification Phosphotyrosine. The Nuclear localization signal (NLS) motif lies at 299-306 (MSDYGTAR). Serine 300 is modified (phosphoserine). Position 304 is a phosphothreonine (threonine 304). Serine 320, serine 346, serine 349, and serine 352 each carry phosphoserine. 4 ARM repeats span residues 358 to 395 (PPPP…HLCY), 398 to 437 (DKVK…NISF), 441 to 475 (QDNK…ITGT), and 476 to 516 (LWNL…NEDC). Residue lysine 421 forms a Glycyl lysine isopeptide (Lys-Gly) (interchain with G-Cter in SUMO2) linkage. Lysine 517 participates in a covalent cross-link: Glycyl lysine isopeptide (Lys-Gly) (interchain with G-Cter in SUMO2). Residues 521–528 (IEWESVLT) carry the Nuclear localization signal (NLS) motif. ARM repeat units follow at residues 534-573 (LRNV…DSDS), 583-624 (LRNL…AKKG), 653-693 (ARGY…NLCA), 700-739 (RYIR…NLAV), 740-780 (DARN…SILN), and 781-826 (TINE…ALVL). Phosphothreonine occurs at positions 566, 572, 587, and 593. A Nuclear localization signal (NLS) motif is present at residues 568–575 (QKDSDSKL). The residue at position 617 (serine 617) is a Phosphoserine. The Nuclear localization signal (NLS) motif lies at 622-629 (KKGKDEWF). The residue at position 713 (serine 713) is a Phosphoserine. A phosphothreonine mark is found at glutamate 788, lysine 794, and asparagine 809. The residue at position 811 (serine 811) is a Phosphoserine. Serine 815, leucine 835, and lysine 841 each carry phosphothreonine. At serine 847 the chain carries Phosphoserine. A disordered region spans residues 855–944 (NASRSQSSHS…LMQDEGQESL (90 aa)). A Phosphothreonine modification is found at alanine 856. Phosphoserine occurs at positions 857, 859, and 861. A Phosphothreonine modification is found at serine 862. The residue at position 864 (serine 864) is a Phosphoserine. Phosphotyrosine is present on tyrosine 865. Phosphoserine is present on serine 868. Threonine 869 carries the phosphothreonine modification. Over residues 875 to 888 (RNQKSDKKPDREEI) the composition is skewed to basic and acidic residues. At serine 879 the chain carries Phosphoserine. A Glycyl lysine isopeptide (Lys-Gly) (interchain with G-Cter in SUMO2) cross-link involves residue lysine 882. A phosphothreonine mark is found at glutamine 889 and serine 895. The span at 889–908 (QMSNMGSNTKSLDNNYSTPN) shows a compositional bias: polar residues. A Phosphoserine modification is found at serine 899. Tyrosine 904 carries the post-translational modification Phosphotyrosine. 3 positions are modified to phosphothreonine: threonine 906, arginine 910, and threonine 916. Positions 909–922 (ERGDHNRTLDRSGD) are enriched in basic and acidic residues. Phosphoserine occurs at positions 920 and 943.

It belongs to the beta-catenin family. As to quaternary structure, belongs to a multiprotein cell-cell adhesion complex that also contains E-cadherin/CDH1, alpha-catenin/CTNNA1, beta-catenin/CTNNB1, and gamma-catenin/JUP. Component of a cadherin:catenin adhesion complex composed of at least of CDH26, beta-catenin/CTNNB1, alpha-catenin/CTNNA1 and p120 catenin/CTNND1. Binds to the C-terminal fragment of PSEN1 and mutually competes for CDH1. Interacts with ZBTB33. Interacts with GLIS2. Interacts with FER. Interacts with NANOS1 (via N-terminal region). Interacts (via N-terminus) with GNA12; the interaction regulates CDH1-mediated cell-cell adhesion. Interacts with GNA13. Interacts with CCDC85B. Interacts with PLPP3; negatively regulates the PLPP3-mediated stabilization of CTNNB1. Interacts with DSG3; the interaction facilitates DSG3 localization and retention at cell-cell junctions. Interacts with CTNND1/p120-catenin; the interaction controls CADH5 endocytosis. In terms of processing, phosphorylated by FER and other protein-tyrosine kinases. Phosphorylated at Ser-288 by PAK5. Dephosphorylated by PTPRJ. In terms of tissue distribution, expressed in vascular endothelium. Melanocytes and melanoma cells primarily express the long isoform 1A, whereas keratinocytes express shorter isoforms, especially 3A. The shortest isoform 4A, is detected in normal keratinocytes and melanocytes, and generally lost from cells derived from squamous cell carcinomas or melanomas. The C-terminal alternatively spliced exon B is present in the p120ctn transcripts in the colon, intestine and prostate, but lost in several tumor tissues derived from these organs.

The protein localises to the cell junction. It is found in the adherens junction. It localises to the cytoplasm. The protein resides in the nucleus. Its subcellular location is the cell membrane. Functionally, key regulator of cell-cell adhesion that associates with and regulates the cell adhesion properties of both C-, E- and N-cadherins, being critical for their surface stability. Promotes localization and retention of DSG3 at cell-cell junctions, via its interaction with DSG3. Beside cell-cell adhesion, regulates gene transcription through several transcription factors including ZBTB33/Kaiso2 and GLIS2, and the activity of Rho family GTPases and downstream cytoskeletal dynamics. Implicated both in cell transformation by SRC and in ligand-induced receptor signaling through the EGF, PDGF, CSF-1 and ERBB2 receptors. The protein is Catenin delta-1 of Homo sapiens (Human).